The primary structure comprises 617 residues: Mitochondrial Rho GTPase 2 (617 aa).

Over 1–590 the chain is Cytoplasmic; the sequence is MKRDVRILLL…LNGSDMSSTS (590 aa). Residues 2 to 168 enclose the Miro 1 domain; sequence KRDVRILLLG…FYYAQKAVLH (167 aa). GTP-binding residues include Gly16, Lys17, Thr18, and Ser19. Thr18 is a Mg(2+) binding site. Mg(2+) is bound at residue Asp57. Residues Ser59, Asn118, Lys119, Asp121, Ala149, and Lys150 each coordinate GTP. 2 consecutive EF-hand domains span residues 184 to 219 and 304 to 339; these read QCVRALSRIFSISDQDNDHILSDAELNCFQKLCFGN and LGHQFLLKLFEKYDEDKDSALSPAELKNLFSVLPYM. Ca(2+)-binding residues include Asp197, Asp199, Asp201, Glu208, Asp317, Asp319, Asp321, and Glu328. In terms of domain architecture, Miro 2 spans 416 to 578; it reads RTVFLCKVIG…YSKLTWAAMY (163 aa). Residues Gly428, Gly430, Lys431, and Thr432 each contribute to the GTP site. Mg(2+) contacts are provided by Thr432 and Glu474. The GTP site is built by Lys528 and Asp530. Residues 591–613 form a helical; Anchor for type IV membrane protein membrane-spanning segment; sequence FWLRVTLGATIAAMLGFALYRAF. Residues 614–617 lie on the Mitochondrial intermembrane side of the membrane; sequence SRHK.

Belongs to the mitochondrial Rho GTPase family. As to quaternary structure, homodimer.

It localises to the mitochondrion outer membrane. It catalyses the reaction GTP + H2O = GDP + phosphate + H(+). The catalysed reaction is ATP + H2O = ADP + phosphate + H(+). It carries out the reaction UTP + H2O = UDP + phosphate + H(+). Functionally, atypical mitochondrial nucleoside-triphosphatase (NTPase) involved in mitochondrial trafficking. Probably involved in control of anterograde transport of mitochondria and their subcellular distribution. Can hydrolyze GTP, ATP and UTP. The protein is Mitochondrial Rho GTPase 2 (rhot2) of Danio rerio (Zebrafish).